A 59-amino-acid polypeptide reads, in one-letter code: MAKLQITLTRSVIGRPETQRKTVEALGLKKTNSSVVVEDNPAIRGQINKVRHLLTVEEK.

This sequence belongs to the universal ribosomal protein uL30 family. As to quaternary structure, part of the 50S ribosomal subunit.

The sequence is that of Large ribosomal subunit protein uL30 from Staphylococcus haemolyticus (strain JCSC1435).